Here is a 154-residue protein sequence, read N- to C-terminus: Large ribosomal subunit protein bL9c (154 aa).

It belongs to the bacterial ribosomal protein bL9 family.

It localises to the plastid. It is found in the chloroplast. In terms of biological role, binds to the 23S rRNA. This chain is Large ribosomal subunit protein bL9c, found in Gracilaria tenuistipitata var. liui (Red alga).